A 387-amino-acid polypeptide reads, in one-letter code: 3-ketoacyl-CoA thiolase (387 aa).

The active-site Acyl-thioester intermediate is the Cys91. Active-site proton acceptor residues include His343 and Cys373.

This sequence belongs to the thiolase-like superfamily. Thiolase family. Heterotetramer of two alpha chains (FadB) and two beta chains (FadA).

It is found in the cytoplasm. It catalyses the reaction an acyl-CoA + acetyl-CoA = a 3-oxoacyl-CoA + CoA. It participates in lipid metabolism; fatty acid beta-oxidation. Its function is as follows. Catalyzes the final step of fatty acid oxidation in which acetyl-CoA is released and the CoA ester of a fatty acid two carbons shorter is formed. This chain is 3-ketoacyl-CoA thiolase, found in Yersinia pseudotuberculosis serotype O:1b (strain IP 31758).